Consider the following 196-residue polypeptide: uncharacterized protein (196 aa).

It to E.coli YjaG.

This is an uncharacterized protein from Haemophilus influenzae (strain ATCC 51907 / DSM 11121 / KW20 / Rd).